The primary structure comprises 436 residues: Putative permease MJ0326 (436 aa).

12 helical membrane passes run 24 to 44, 51 to 71, 79 to 99, 103 to 123, 139 to 159, 171 to 191, 194 to 214, 235 to 255, 322 to 342, 345 to 365, 381 to 401, and 416 to 436; these read LAGI…PQIL, FGAV…VMGL, LAPG…GMGI, VALG…LTKI, TAVG…GIIV, LMEP…ILVS, VIGA…ILGI, LDIM…FFFV, GFVS…YPVV, IPPY…MRSV, ITLL…LGFI, and VHWL…YLSG.

Belongs to the nucleobase:cation symporter-2 (NCS2) (TC 2.A.40) family. Azg-like subfamily.

It localises to the cell membrane. This is Putative permease MJ0326 from Methanocaldococcus jannaschii (strain ATCC 43067 / DSM 2661 / JAL-1 / JCM 10045 / NBRC 100440) (Methanococcus jannaschii).